We begin with the raw amino-acid sequence, 81 residues long: Small ribosomal subunit protein bS20 (81 aa).

Belongs to the bacterial ribosomal protein bS20 family.

In terms of biological role, binds directly to 16S ribosomal RNA. The protein is Small ribosomal subunit protein bS20 of Mycoplasma mycoides subsp. mycoides SC (strain CCUG 32753 / NCTC 10114 / PG1).